The chain runs to 545 residues: Chaperonin GroEL (545 aa).

ATP contacts are provided by residues T30–P33, K51, D87–T91, G415, and D495.

It belongs to the chaperonin (HSP60) family. In terms of assembly, forms a cylinder of 14 subunits composed of two heptameric rings stacked back-to-back. Interacts with the co-chaperonin GroES.

It is found in the cytoplasm. It catalyses the reaction ATP + H2O + a folded polypeptide = ADP + phosphate + an unfolded polypeptide.. Functionally, together with its co-chaperonin GroES, plays an essential role in assisting protein folding. The GroEL-GroES system forms a nano-cage that allows encapsulation of the non-native substrate proteins and provides a physical environment optimized to promote and accelerate protein folding. The sequence is that of Chaperonin GroEL from Shewanella sp. (strain ANA-3).